Consider the following 463-residue polypeptide: Interferon-inducible GTPase 5 (463 aa).

The 183-residue stretch at 52–234 (TRLEVGVTGE…PMLVTTWEHD (183 aa)) folds into the IRG-type G domain. Residues 61–68 (ESGAGKSS), 86–90 (TGVVE), 168–170 (KVD), and 215–217 (SNL) each bind GTP. Phosphoserine is present on residues serine 246 and serine 303. Residues 409 to 438 (QGEVSLEAAGDNAVEKRSSGEGTSEEAPLS) are disordered.

This sequence belongs to the TRAFAC class dynamin-like GTPase superfamily. IRG family.

Its subcellular location is the cell projection. It localises to the cilium. The protein resides in the flagellum. The protein localises to the lipid droplet. The catalysed reaction is GTP + H2O = GDP + phosphate + H(+). Required for sperm motility and therefore male fertility, via positive regulation of spermatozoa fibrous sheath formation. The polypeptide is Interferon-inducible GTPase 5 (Irgc) (Rattus norvegicus (Rat)).